The sequence spans 696 residues: D-(-)-3-hydroxybutyrate oligomer hydrolase (696 aa).

A signal peptide spans 1-26; that stretch reads MDTHGWGSRILVGAALAALTMLGACN. The Charge relay system role is filled by Ser309.

This sequence belongs to the D-(-)-3-hydroxybutyrate oligomer hydrolase family.

It is found in the secreted. The catalysed reaction is (3R)-hydroxybutanoate dimer + H2O = 2 (R)-3-hydroxybutanoate + H(+). It functions in the pathway lipid metabolism; butanoate metabolism. Participates in the degradation of poly-3-hydroxybutyrate (PHB). It works downstream of poly(3-hydroxybutyrate) depolymerase, hydrolyzing D(-)-3-hydroxybutyrate oligomers of various length (3HB-oligomers) into 3HB-monomers. This Burkholderia vietnamiensis (strain G4 / LMG 22486) (Burkholderia cepacia (strain R1808)) protein is D-(-)-3-hydroxybutyrate oligomer hydrolase.